Reading from the N-terminus, the 54-residue chain is Califin-C (54 aa).

C25 and C53 are disulfide-bonded. L36 carries the post-translational modification Leucine amide.

This sequence belongs to the molluscan ELH family. In terms of assembly, this protein consists of a large 36-residue subunit, bound by a single disulfide-bond to a small 18-residue subunit.

Its subcellular location is the secreted. Its function is as follows. Injected in sexually mature animals califin C excites LB and LC cells of the abdominal ganglion and cause egg-laying. This Aplysia californica (California sea hare) protein is Califin-C.